The chain runs to 188 residues: Adenine phosphoribosyltransferase (188 aa).

This sequence belongs to the purine/pyrimidine phosphoribosyltransferase family. Homodimer.

It localises to the cytoplasm. The catalysed reaction is AMP + diphosphate = 5-phospho-alpha-D-ribose 1-diphosphate + adenine. Its pathway is purine metabolism; AMP biosynthesis via salvage pathway; AMP from adenine: step 1/1. Its function is as follows. Catalyzes a salvage reaction resulting in the formation of AMP, that is energically less costly than de novo synthesis. This Paraburkholderia phymatum (strain DSM 17167 / CIP 108236 / LMG 21445 / STM815) (Burkholderia phymatum) protein is Adenine phosphoribosyltransferase.